The following is a 289-amino-acid chain: dTDP-rhamnosyl transferase RfbG (289 aa).

Belongs to the glycosyltransferase 2 family.

It participates in bacterial outer membrane biogenesis; lipopolysaccharide biosynthesis. The polypeptide is dTDP-rhamnosyl transferase RfbG (rfbG) (Shigella flexneri).